The primary structure comprises 499 residues: MEEFKRYLELDRSQQHDFVYPLIFQEYIYALAHDHGLTRSIFLENIGYDNKFSLLIVKHLITQMYQQNHFLFSANDSNQNLFFGHNTNLYSQMILEGFVAVVEIPFSLFSLEGKEIVKSQNLRSIHSIFPFLEDKFSHLNYVLDILIPHSIHLEISVQTLRYWVKDASSLYLLRFFLHMYWNWNSLITPKKSSFDFSKRNQRLFLFLYNFHICEYESIFVFLRKQSSHLRSISSGTFLERRYFYGKIEHFLEVFTKDFQVILWLFKDPFIHYVRYQGKYILASKGTSLLMNKWKSYLVNFWQCYFYMWSQPGRIHINQLSKHSPDFLGYLSSVRLNPSMVRSQMLENSFLIGNAIKKFDTIVPIIPMIGSLSKAKFCNVLGHPISKPVWADLSDSDIIDRFGRIYRNLSHYHSGSSKKTSLYRIKYIXXXXXXXTLARKHKITVRAFLKRLGSELLEEFFTGEEQVFSLTFPSSTSQGLYRRRIWYLDIVCINDLASHE.

The protein belongs to the intron maturase 2 family. MatK subfamily.

The protein localises to the plastid. The protein resides in the chloroplast. Its function is as follows. Usually encoded in the trnK tRNA gene intron. Probably assists in splicing its own and other chloroplast group II introns. The sequence is that of Maturase K from Camellia sasanqua (Christmas camellia).